A 339-amino-acid chain; its full sequence is Ferredoxin--NADP reductase (339 aa).

FAD is bound by residues aspartate 36, glutamine 44, tyrosine 49, valine 89, phenylalanine 123, aspartate 290, and threonine 331.

This sequence belongs to the ferredoxin--NADP reductase type 2 family. Homodimer. FAD is required as a cofactor.

The catalysed reaction is 2 reduced [2Fe-2S]-[ferredoxin] + NADP(+) + H(+) = 2 oxidized [2Fe-2S]-[ferredoxin] + NADPH. This Acidiphilium cryptum (strain JF-5) protein is Ferredoxin--NADP reductase.